Consider the following 415-residue polypeptide: 2-oxoadipate dioxygenase/decarboxylase (415 aa).

2-oxoadipate is bound by residues histidine 66, arginine 70, and histidine 225. Histidine 66 contacts Fe(2+). Residues histidine 225 and glutamate 296 each coordinate Fe(2+). Alanine 361 contacts 2-oxoadipate.

The protein belongs to the 2-oxoadipate dioxygenase/decarboxylase family. The cofactor is Fe(2+).

It catalyses the reaction 2-oxoadipate + O2 = (R)-2-hydroxyglutarate + CO2. Functionally, catalyzes the decarboxylation and hydroxylation of 2-oxoadipate (2OA) to form D-2-hydroxyglutarate (D-2-HGA). This is 2-oxoadipate dioxygenase/decarboxylase from Mycobacterium bovis (strain ATCC BAA-935 / AF2122/97).